The chain runs to 454 residues: Carbon catabolite repressor protein 4 homolog 5 (454 aa).

The interval 1–76 (MSGYERKNTT…SLRRRRRTKE (76 aa)) is disordered. The segment covering 31 to 41 (VYEKSNRKESI) has biased composition (basic and acidic residues). Basic residues predominate over residues 61 to 75 (VRHSKSSLRRRRRTK). Residue glutamate 153 coordinates Mg(2+).

It belongs to the CCR4/nocturin family. As to quaternary structure, component of the CCR4-NOT complex, at least composed of CRR4 and CAF1 proteins. The cofactor is Mg(2+).

Its subcellular location is the nucleus. The protein resides in the cytoplasm. The enzyme catalyses Exonucleolytic cleavage of poly(A) to 5'-AMP.. Its function is as follows. Acts as a catalytic component of the CCR4-NOT core complex, which in the nucleus seems to be a general transcription factor, and in the cytoplasm the major mRNA deadenylase involved in mRNA turnover. This Arabidopsis thaliana (Mouse-ear cress) protein is Carbon catabolite repressor protein 4 homolog 5 (CCR4-5).